A 365-amino-acid polypeptide reads, in one-letter code: Peptide chain release factor 2 (365 aa).

The residue at position 252 (Gln252) is an N5-methylglutamine.

Belongs to the prokaryotic/mitochondrial release factor family. Post-translationally, methylated by PrmC. Methylation increases the termination efficiency of RF2.

It is found in the cytoplasm. Functionally, peptide chain release factor 2 directs the termination of translation in response to the peptide chain termination codons UGA and UAA. This chain is Peptide chain release factor 2, found in Colwellia psychrerythraea (strain 34H / ATCC BAA-681) (Vibrio psychroerythus).